The following is a 616-amino-acid chain: Zinc metalloproteinase-disintegrin-like VLAIP-A (616 aa).

An N-terminal signal peptide occupies residues 1–20 (MMQVLLVTISLAVFPYQGSS). A propeptide spanning residues 21–194 (IILESGNVND…KASQLNLTPE (174 aa)) is cleaved from the precursor. Position 195 is a pyrrolidone carboxylic acid (Gln195). Residues 203–399 (KYIKLVIVAD…KMPQCILNKP (197 aa)) enclose the Peptidase M12B domain. 3 cysteine pairs are disulfide-bonded: Cys314/Cys394, Cys354/Cys378, and Cys356/Cys361. Position 339 (His339) interacts with Zn(2+). Glu340 is an active-site residue. Zn(2+)-binding residues include His343 and His349. A glycan (N-linked (GlcNAc...) asparagine) is linked at Asn377. A Disintegrin domain is found at 407–493 (PAVCGNYLVE…ECPTDQFQRN (87 aa)). Residues Val409, Asn412, Leu414, Glu416, Glu419, and Asp422 each contribute to the Ca(2+) site. 14 cysteine pairs are disulfide-bonded: Cys410–Cys439, Cys421–Cys434, Cys423–Cys429, Cys433–Cys456, Cys447–Cys453, Cys452–Cys478, Cys465–Cys485, Cys472–Cys504, Cys497–Cys509, Cys516–Cys566, Cys531–Cys577, Cys544–Cys554, Cys561–Cys603, and Cys597–Cys609. The D/ECD-tripeptide motif lies at 471-473 (ECD).

This sequence belongs to the venom metalloproteinase (M12B) family. P-III subfamily. P-IIIc sub-subfamily. As to quaternary structure, heterodimer; disulfide-linked. Zn(2+) serves as cofactor. The N-terminus is blocked. In terms of tissue distribution, expressed by the venom gland.

Its subcellular location is the secreted. With respect to regulation, inhibited by EDTA or 1,10-phenanthroline. Not inhibited by PMSF. In terms of biological role, snake venom zinc metalloprotease that hydrolyzes the alpha-chain (FGA) and more slowly the beta-chain (FGB) of fibrinogen, without affecting the gamma-chain. Cleaves alpha-chain of fibrinogen at '432-Lys-|-Leu-433' and '535-Pro-|-Met-536' bonds. Induces apoptosis in vascular endothelial cells and inhibits endothelial cell adhesion to extracellular matrix proteins such as fibrinogen, fibronectin, vitronectin, collagen I, and collagen IV. Also hydrolyzes azocasein, and insulin B-chain (at the '38-Ala-|-Leu-39' bond). The sequence is that of Zinc metalloproteinase-disintegrin-like VLAIP-A from Macrovipera lebetinus (Levantine viper).